We begin with the raw amino-acid sequence, 494 residues long: Metalloprotease TIKI1 (494 aa).

A signal peptide spans Met1–Ala25. Over Asn26–Arg467 the chain is Extracellular. Residues Asn234 and Asn282 are each glycosylated (N-linked (GlcNAc...) asparagine). Residues Thr468–Gln488 form a helical membrane-spanning segment. Over Met489–Leu494 the chain is Cytoplasmic.

It belongs to the TIKI family. It depends on Mn(2+) as a cofactor. The cofactor is Co(2+).

Its subcellular location is the cell membrane. In terms of biological role, metalloprotease that acts as a negative regulator of the Wnt signaling pathway by mediating the cleavage of the N-terminal residues of a subset of Wnt proteins. Following cleavage, Wnt proteins become oxidized and form large disulfide-bond oligomers, leading to their inactivation. This chain is Metalloprotease TIKI1 (trabd2a), found in Danio rerio (Zebrafish).